We begin with the raw amino-acid sequence, 527 residues long: Optineurin (527 aa).

Disordered stretches follow at residues 1 to 32 (MSHQPLSCLTEKEDSPTESTGNGPPYLAHPNL) and 101 to 143 (SHEN…KDQL). Residues 38 to 170 (EELLQQMKEL…VSELQLKLNS (133 aa)) adopt a coiled-coil conformation. The tract at residues 58 to 209 (MKLNNQAMKG…GPTRTVSTSR (152 aa)) is interaction with Rab8. Residues 176–181 (DSFVEI) carry the LIR motif. Ser-177 is modified (phosphoserine; by TBK1). Residues 186-197 (GEAEGSVKEIKH) are compositionally biased toward basic and acidic residues. Disordered regions lie at residues 186–214 (GEAEGSVKEIKHSPGPTRTVSTSRALSKY) and 262–292 (SDFEKKASNRSEIETQTEGSTEKENDEEKGL). Residue Ser-198 is modified to Phosphoserine. Residues 201 to 210 (PTRTVSTSRA) are compositionally biased toward polar residues. Residues 239 to 458 (CLREGNQKVE…LLKENDAFED (220 aa)) are a coiled coil. Basic and acidic residues-rich tracts occupy residues 262 to 274 (SDFEKKASNRSEI) and 281 to 292 (STEKENDEEKGL). The segment at 361–527 (TRKESEKVDR…LQIHVMDCII (167 aa)) is interaction with HD. The interval 362 to 470 (RKESEKVDRA…RQSLMEMQSR (109 aa)) is interaction with MYO6. The UBAN signature appears at 424–429 (DFHAER). Position 476 is a phosphoserine (Ser-476). The CCHC NOA-type zinc finger occupies 497-527 (QRNIPIHSCPKCGEVLPDIDTLQIHVMDCII). Cys-505, Cys-508, His-521, and Cys-525 together coordinate Zn(2+).

Self-associates. Interacts with HD. Interacts with GTF3A. Interacts with MYO6. Interacts (via UBAN) with ubiquitinated TFRC. Interacts with GTP-bound Rab8 (RAB8A and/or RAB8B). Interacts with TBC1D17. Interacts with TBK1. Interacts with TRAF3. Binds to linear ubiquitin chains. Interacts with LC3 family members MAP1LC3A, MAP1LC3B, GABARAP, GABARAPL1 and GABARAPL2; OPTN phosphorylation increases the association (at least with MAP1LC3B). Interacts with RAB12; the interaction may be indirect. Interacts with TBK1; this interaction leads to the Golgi localization of TBK1 and its subsequent activation. Interacts with palmitoyltransferase ZDHHC17/HIP14; the interaction does not lead to palmitoylation of OPTN. Interacts with CYLD. Interacts with TOM1; the interaction is indirect and is mediated by MYO6, which acts as a bridge between TOM1 and OPTN. Interacts with USP12; the interaction is independent of USP12 deubiquitinase activity and may be involved in regulation of autophagic flux. Post-translationally, phosphorylated by TBK1, leading to restrict bacterial proliferation in case of infection.

The protein localises to the cytoplasm. It is found in the perinuclear region. It localises to the golgi apparatus. The protein resides in the trans-Golgi network. Its subcellular location is the cytoplasmic vesicle. The protein localises to the autophagosome. It is found in the recycling endosome. Functionally, plays an important role in the maintenance of the Golgi complex, in membrane trafficking, in exocytosis, through its interaction with myosin VI and Rab8. Links myosin VI to the Golgi complex and plays an important role in Golgi ribbon formation. Negatively regulates the induction of IFNB in response to RNA virus infection. Plays a neuroprotective role in the eye and optic nerve. Probably part of the TNF-alpha signaling pathway that can shift the equilibrium toward induction of cell death. May act by regulating membrane trafficking and cellular morphogenesis via a complex that contains Rab8 and huntingtin (HD). Mediates the interaction of Rab8 with the probable GTPase-activating protein TBC1D17 during Rab8-mediated endocytic trafficking, such as that of transferrin receptor (TFRC/TfR); regulates Rab8 recruitment to tubules emanating from the endocytic recycling compartment. Autophagy receptor that interacts directly with both the cargo to become degraded and an autophagy modifier of the MAP1 LC3 family; targets ubiquitin-coated bacteria (xenophagy) and appears to function in the same pathway as SQSTM1 and CALCOCO2/NDP52. The sequence is that of Optineurin (OPTN) from Pongo abelii (Sumatran orangutan).